An 81-amino-acid chain; its full sequence is Photosystem I iron-sulfur center (81 aa).

4Fe-4S ferredoxin-type domains are found at residues 2 to 31 (SHSVKVYDTCIGCTQCVRACPCDVLEMVSW) and 39 to 68 (IASAPRTEDCIGCKRCETACPTDFLSVRVY). [4Fe-4S] cluster contacts are provided by Cys-11, Cys-14, Cys-17, Cys-21, Cys-48, Cys-51, Cys-54, and Cys-58.

As to quaternary structure, the eukaryotic PSI reaction center is composed of at least 11 subunits. It depends on [4Fe-4S] cluster as a cofactor.

It is found in the plastid. The protein resides in the chloroplast thylakoid membrane. It carries out the reaction reduced [plastocyanin] + hnu + oxidized [2Fe-2S]-[ferredoxin] = oxidized [plastocyanin] + reduced [2Fe-2S]-[ferredoxin]. Its function is as follows. Apoprotein for the two 4Fe-4S centers FA and FB of photosystem I (PSI); essential for photochemical activity. FB is the terminal electron acceptor of PSI, donating electrons to ferredoxin. The C-terminus interacts with PsaA/B/D and helps assemble the protein into the PSI complex. Required for binding of PsaD and PsaE to PSI. PSI is a plastocyanin/cytochrome c6-ferredoxin oxidoreductase, converting photonic excitation into a charge separation, which transfers an electron from the donor P700 chlorophyll pair to the spectroscopically characterized acceptors A0, A1, FX, FA and FB in turn. This Rhodomonas salina (Cryptomonas salina) protein is Photosystem I iron-sulfur center.